Consider the following 374-residue polypeptide: Chaperone protein DnaJ (374 aa).

In terms of domain architecture, J spans 5-70 (DYYEVLGVER…SKRAAFDQYG (66 aa)). The segment at 133–211 (GTTVSIRVPT…CHGEGRVEEY (79 aa)) adopts a CR-type zinc-finger fold. 8 residues coordinate Zn(2+): Cys146, Cys149, Cys163, Cys166, Cys185, Cys188, Cys199, and Cys202. CXXCXGXG motif repeat units follow at residues 146–153 (CQPCDGSG), 163–170 (CPTCGGIG), 185–192 (CPRCHGQG), and 199–206 (CTSCHGEG).

The protein belongs to the DnaJ family. As to quaternary structure, homodimer. Requires Zn(2+) as cofactor.

Its subcellular location is the cytoplasm. In terms of biological role, participates actively in the response to hyperosmotic and heat shock by preventing the aggregation of stress-denatured proteins and by disaggregating proteins, also in an autonomous, DnaK-independent fashion. Unfolded proteins bind initially to DnaJ; upon interaction with the DnaJ-bound protein, DnaK hydrolyzes its bound ATP, resulting in the formation of a stable complex. GrpE releases ADP from DnaK; ATP binding to DnaK triggers the release of the substrate protein, thus completing the reaction cycle. Several rounds of ATP-dependent interactions between DnaJ, DnaK and GrpE are required for fully efficient folding. Also involved, together with DnaK and GrpE, in the DNA replication of plasmids through activation of initiation proteins. In Pseudomonas putida (strain ATCC 700007 / DSM 6899 / JCM 31910 / BCRC 17059 / LMG 24140 / F1), this protein is Chaperone protein DnaJ.